Consider the following 126-residue polypeptide: Glycine cleavage system H protein (126 aa).

The region spanning 24–105 is the Lipoyl-binding domain; sequence TLTVGITDHA…AYGVWLFKIK (82 aa). Lys65 bears the N6-lipoyllysine mark.

Belongs to the GcvH family. As to quaternary structure, the glycine cleavage system is composed of four proteins: P, T, L and H. The cofactor is (R)-lipoate.

The glycine cleavage system catalyzes the degradation of glycine. The H protein shuttles the methylamine group of glycine from the P protein to the T protein. The protein is Glycine cleavage system H protein of Burkholderia ambifaria (strain MC40-6).